The following is a 442-amino-acid chain: MNKHYPHYLDLQPAMHAKGVVRLPGSKSISNRTLLLAALADGTTQIRDLLASDDTHVMLMALQKIGVKWEQIGESQDYVVHGVNGAFPVHQADLFMGNAGTAIRPLTAALAVTGGDYTLHGVSRMHERPIGDLVDALNAIGTHIEYTGEPGYPPLHIQRGRIHAQRMQVRGNVSSQFLTALLMAAPLMAREQDVTIDVVGELISKPYIEITLNLMRRFGVEVQRDGWQSFTIAAGQRYISPGIIHVEGDASSASYFLAAGAIAGGPVRVEGVGKNSIQGDVRFVESLQQMGATITMGDNWIEAKSNGALRAIDADFNHIPDAAMTIAVAALYADGTSTLRNIGSWRVKETDRISAMTIELRKLGASVEEGEDYLRITPPAVIQPAAIDTYDDHRMAMCFSLATLDGAIRKGSKIRINDPQCVAKTFPDYFTAFAKVTEDSLF.

Lys27, Ser28, and Arg32 together coordinate 3-phosphoshikimate. A phosphoenolpyruvate-binding site is contributed by Lys27. Residues Gly100 and Arg128 each contribute to the phosphoenolpyruvate site. Residues Ser174, Ser175, Gln176, Ser204, Asp321, and Lys348 each contribute to the 3-phosphoshikimate site. Gln176 contacts phosphoenolpyruvate. Asp321 acts as the Proton acceptor in catalysis. Residues Arg352, Arg394, and Lys424 each coordinate phosphoenolpyruvate.

This sequence belongs to the EPSP synthase family. Monomer.

It localises to the cytoplasm. The catalysed reaction is 3-phosphoshikimate + phosphoenolpyruvate = 5-O-(1-carboxyvinyl)-3-phosphoshikimate + phosphate. It functions in the pathway metabolic intermediate biosynthesis; chorismate biosynthesis; chorismate from D-erythrose 4-phosphate and phosphoenolpyruvate: step 6/7. In terms of biological role, catalyzes the transfer of the enolpyruvyl moiety of phosphoenolpyruvate (PEP) to the 5-hydroxyl of shikimate-3-phosphate (S3P) to produce enolpyruvyl shikimate-3-phosphate and inorganic phosphate. In Herminiimonas arsenicoxydans, this protein is 3-phosphoshikimate 1-carboxyvinyltransferase.